Reading from the N-terminus, the 269-residue chain is Regulatory protein RecX (269 aa).

The protein belongs to the RecX family.

The protein localises to the cytoplasm. In terms of biological role, modulates RecA activity. This Listeria monocytogenes serotype 4b (strain CLIP80459) protein is Regulatory protein RecX.